The chain runs to 198 residues: MEFYPVAIEKLIEEFAKLPSIGKKSAQRLTLHILNLPKDEVEEFANALVKARGTIKYCSVCGNFTDTDPCAICSNPNREKDIICVVEQPKDIMTMEKVKEFNGLYHVLHGTISPMQGRGPQDIRIRELVARMSGDVKEVIVATNPTIEGEATAMYISKILKPLDVKVTRIAAGIPVGGDLEYADEVTLSKALEGRTVI.

A C4-type zinc finger spans residues C58 to C73. One can recognise a Toprim domain in the interval D81–P175.

This sequence belongs to the RecR family.

May play a role in DNA repair. It seems to be involved in an RecBC-independent recombinational process of DNA repair. It may act with RecF and RecO. The chain is Recombination protein RecR from Clostridium perfringens (strain ATCC 13124 / DSM 756 / JCM 1290 / NCIMB 6125 / NCTC 8237 / Type A).